A 48-amino-acid chain; its full sequence is Osteocalcin (48 aa).

A Gla domain is found at 1-44 (AGTAPADLTVAQLESLKEVCEANLACEHMMDVSGIIAAYTAYYG). Positions 14, 18, 21, and 27 each coordinate Ca(2+). 3 positions are modified to 4-carboxyglutamate: Glu14, Glu18, and Glu21. Residues Cys20 and Cys26 are joined by a disulfide bond.

This sequence belongs to the osteocalcin/matrix Gla protein family. Post-translationally, gamma-carboxyglutamate residues are formed by vitamin K dependent carboxylation by GGCX. These residues are essential for the binding of calcium.

The protein resides in the secreted. It is found in the extracellular space. It localises to the extracellular matrix. Its function is as follows. The carboxylated form is one of the main organic components of the bone matrix, which constitutes 1-2% of the total bone protein. The carboxylated form binds strongly to apatite and calcium. The protein is Osteocalcin (bglap) of Cyprinus carpio (Common carp).